Consider the following 543-residue polypeptide: Putative cysteine ligase BshC (543 aa).

Residues 419–440 adopt a coiled-coil conformation; it reads DEKNNDNIDEVVEEVKAQISDI.

This sequence belongs to the BshC family.

In terms of biological role, involved in bacillithiol (BSH) biosynthesis. May catalyze the last step of the pathway, the addition of cysteine to glucosamine malate (GlcN-Mal) to generate BSH. The polypeptide is Putative cysteine ligase BshC (Oceanobacillus iheyensis (strain DSM 14371 / CIP 107618 / JCM 11309 / KCTC 3954 / HTE831)).